A 363-amino-acid polypeptide reads, in one-letter code: Zinc phosphodiesterase ELAC protein 1 (363 aa).

The Zn(2+) site is built by His-62, His-64, Asp-66, His-67, His-182, Asp-253, and His-313. The Proton acceptor role is filled by Asp-66.

Belongs to the RNase Z family. In terms of assembly, homodimer. Zn(2+) is required as a cofactor.

The protein resides in the cytoplasm. Its subcellular location is the cytosol. It is found in the nucleus. It carries out the reaction Endonucleolytic cleavage of RNA, removing extra 3' nucleotides from tRNA precursor, generating 3' termini of tRNAs. A 3'-hydroxy group is left at the tRNA terminus and a 5'-phosphoryl group is left at the trailer molecule.. Its function is as follows. Zinc phosphodiesterase, which displays some tRNA 3'-processing endonuclease activity. Specifically involved in tRNA repair: acts downstream of the ribosome-associated quality control (RQC) pathway by removing a 2',3'-cyclic phosphate from tRNAs following cleavage by ANKZF1. tRNAs are then processed by TRNT1. The sequence is that of Zinc phosphodiesterase ELAC protein 1 (ELAC1) from Bos taurus (Bovine).